We begin with the raw amino-acid sequence, 500 residues long: Histidine--tRNA ligase (500 aa).

This sequence belongs to the class-II aminoacyl-tRNA synthetase family. In terms of assembly, homodimer.

Its subcellular location is the cytoplasm. The enzyme catalyses tRNA(His) + L-histidine + ATP = L-histidyl-tRNA(His) + AMP + diphosphate + H(+). The sequence is that of Histidine--tRNA ligase from Ruegeria sp. (strain TM1040) (Silicibacter sp.).